A 491-amino-acid polypeptide reads, in one-letter code: Aspartyl/glutamyl-tRNA(Asn/Gln) amidotransferase subunit B (491 aa).

Belongs to the GatB/GatE family. GatB subfamily. Heterotrimer of A, B and C subunits.

The catalysed reaction is L-glutamyl-tRNA(Gln) + L-glutamine + ATP + H2O = L-glutaminyl-tRNA(Gln) + L-glutamate + ADP + phosphate + H(+). The enzyme catalyses L-aspartyl-tRNA(Asn) + L-glutamine + ATP + H2O = L-asparaginyl-tRNA(Asn) + L-glutamate + ADP + phosphate + 2 H(+). In terms of biological role, allows the formation of correctly charged Asn-tRNA(Asn) or Gln-tRNA(Gln) through the transamidation of misacylated Asp-tRNA(Asn) or Glu-tRNA(Gln) in organisms which lack either or both of asparaginyl-tRNA or glutaminyl-tRNA synthetases. The reaction takes place in the presence of glutamine and ATP through an activated phospho-Asp-tRNA(Asn) or phospho-Glu-tRNA(Gln). The sequence is that of Aspartyl/glutamyl-tRNA(Asn/Gln) amidotransferase subunit B from Nostoc punctiforme (strain ATCC 29133 / PCC 73102).